The chain runs to 106 residues: Nucleoid-associated protein DP1429 (106 aa).

The protein belongs to the YbaB/EbfC family. In terms of assembly, homodimer.

The protein resides in the cytoplasm. The protein localises to the nucleoid. In terms of biological role, binds to DNA and alters its conformation. May be involved in regulation of gene expression, nucleoid organization and DNA protection. This is Nucleoid-associated protein DP1429 from Desulfotalea psychrophila (strain LSv54 / DSM 12343).